Reading from the N-terminus, the 271-residue chain is Phosphate import ATP-binding protein PstB (271 aa).

The ABC transporter domain occupies 24 to 266 (MIGQDVSVYY…PDDPRTQDYI (243 aa)). 56-63 (GPSGCGKS) is an ATP binding site.

The protein belongs to the ABC transporter superfamily. Phosphate importer (TC 3.A.1.7) family. In terms of assembly, the complex is composed of two ATP-binding proteins (PstB), two transmembrane proteins (PstC and PstA) and a solute-binding protein (PstS).

It localises to the cell inner membrane. The catalysed reaction is phosphate(out) + ATP + H2O = ADP + 2 phosphate(in) + H(+). Functionally, part of the ABC transporter complex PstSACB involved in phosphate import. Responsible for energy coupling to the transport system. The sequence is that of Phosphate import ATP-binding protein PstB from Rhizobium etli (strain ATCC 51251 / DSM 11541 / JCM 21823 / NBRC 15573 / CFN 42).